Here is an 859-residue protein sequence, read N- to C-terminus: Nitrate reductase [NADPH] (859 aa).

A Mo-molybdopterin-binding site is contributed by C137. The region spanning 502–578 (DVVIKYSEFE…LPSMHLGRLE (77 aa)) is the Cytochrome b5 heme-binding domain. 2 residues coordinate heme: H538 and H561. Residues 602–713 (RKWHKITLAE…KGPVGEFEYV (112 aa)) enclose the FAD-binding FR-type domain. FAD contacts are provided by residues 655–658 (RAYT), 672–676 (LIKVY), F677, 687–689 (IMT), S737, and T740. NADP(+) is bound at residue 829-838 (MLLVCGPPGM).

This sequence belongs to the nitrate reductase family. As to quaternary structure, homodimer. It depends on FAD as a cofactor. Requires heme as cofactor. The cofactor is Mo-molybdopterin.

The enzyme catalyses nitrite + NADP(+) + H2O = nitrate + NADPH + H(+). Functionally, nitrate reductase is a key enzyme involved in the first step of nitrate assimilation in plants, fungi and bacteria. This is Nitrate reductase [NADPH] (YNR1) from Pichia angusta (Yeast).